The chain runs to 85 residues: Defensin-like protein 76 (85 aa).

An N-terminal signal peptide occupies residues 1–27 (MQNQKHSHILTAITIVLLFAMAAKINA). Intrachain disulfides connect cysteine 35-cysteine 70, cysteine 40-cysteine 59, cysteine 44-cysteine 68, and cysteine 48-cysteine 69.

This sequence belongs to the DEFL family.

The protein localises to the secreted. This chain is Defensin-like protein 76 (LCR86), found in Arabidopsis thaliana (Mouse-ear cress).